We begin with the raw amino-acid sequence, 157 residues long: Ribosomal RNA large subunit methyltransferase H (157 aa).

Residues leucine 73, glycine 105, and 124–129 (LSKMTF) contribute to the S-adenosyl-L-methionine site.

Belongs to the RNA methyltransferase RlmH family. Homodimer.

The protein localises to the cytoplasm. It carries out the reaction pseudouridine(1915) in 23S rRNA + S-adenosyl-L-methionine = N(3)-methylpseudouridine(1915) in 23S rRNA + S-adenosyl-L-homocysteine + H(+). Functionally, specifically methylates the pseudouridine at position 1915 (m3Psi1915) in 23S rRNA. The polypeptide is Ribosomal RNA large subunit methyltransferase H (Christiangramia forsetii (strain DSM 17595 / CGMCC 1.15422 / KT0803) (Gramella forsetii)).